Reading from the N-terminus, the 833-residue chain is Vacuolar protein sorting-associated protein 16 homolog (833 aa).

This sequence belongs to the VPS16 family. Component of the homotypic fusion and vacuole protein sorting (HOPS) complex, composed of Vps16A, car/Vps33A, dor/Vps18, Vps39, Vps11 and lt/Vps41. Interacts with Syx17 (via SNARE domain); the interaction may involve multiple components of the HOPS complex and may promote assembly of the Syx17-Snap29-Vamp7 trans-SNARE complex. Component of the class C core vacuole/endosome tethering (CORVET) complex composed of at least Vps8, dor/Vps18, car/Vps33A and Vps16A; unlike in other species, Vps11 is not part of the Drosophila complex. Due to the reduced number of components the Drosophila CORVET complex is often referred to as the miniCORVET complex. The tethering complex core made up of Vps16A, car/Vps33A and dor/Vps18 and shared by both HOPS and CORVET, preferentially associates with CORVET-specific Vps8 over HOPS-specific lt/Vps41. Interacts with Rab2 (GTP-bound form).

Its subcellular location is the late endosome membrane. The protein resides in the lysosome membrane. It is found in the cytoplasmic vesicle. It localises to the autophagosome. In terms of biological role, core component of the class C core vacuole/endosome tethering (CORVET) and the homotypic fusion and vacuole protein sorting (HOPS) tethering complexes involved in endo-lysosomal vesicle trafficking and lysosome biogenesis. The CORVET complex facilitates docking and fusion of endosomal vesicles during endosome maturation, acts upstream of HOPS, but is not involved in autophagic flux. The CORVET complex may cooperate with the early endosomal tether Rbsn-5 to mediate endosomal fusion. The HOPS complex facilitates docking and fusion of lysosomes with late endosomes and several other types of vesicles. The HOPS complex is also involved in autophagy and crinophagy (the elimination of unused secretory granules through their fusion with lysosomes). The HOPS complex mediates autophagocitic flux, probably by binding autophagosome-associated Syx17/syntaxin 17, promoting assembly of the trans-SNARE complex and instigating autophagosome-lysosome fusion. Independent of Syx17/syntaxin 17, HOPS is involved in biosynthetic transport to lysosomes and lysosome-related organelles such as eye-pigment granules. Required for endocytic degradation of boss/bride of sevenless and N/Notch in developing ommatidia. This Drosophila melanogaster (Fruit fly) protein is Vacuolar protein sorting-associated protein 16 homolog.